A 302-amino-acid polypeptide reads, in one-letter code: MNVSVVTERRTPAYSSLAAGELNGLVARALLTEARLTPKPGLVDIRNSGAHRDMDLAAFERSTTAIAPWMEKFFIMGNNTAALAAENVLVMLRPLGMACENDMLQATNGVNTHRGAIFAFGLLSAAIGRLLARGEPLEQNRICDQVARLSRNIVAHELSARKAGKLTKSETHFQCYGLSGARGEAESGFRTVRTQALPVFNRVVQEHDDTHLALLQTLLHLMAWNDDTNLVSRGGLEGLYYVQQQAQKLLWQGGVLVEGGIEAMQFLDDELILRNLSPGGSADLLAVTWFLSHFPAGSLYPE.

Belongs to the CitG/MdcB family.

The catalysed reaction is 3'-dephospho-CoA + ATP = 2'-(5''-triphospho-alpha-D-ribosyl)-3'-dephospho-CoA + adenine. This is Probable 2-(5''-triphosphoribosyl)-3'-dephosphocoenzyme-A synthase 1 from Salmonella typhi.